Consider the following 235-residue polypeptide: Small ribosomal subunit protein eS4 (235 aa).

The region spanning 38–99 is the S4 RNA-binding domain; that stretch reads VTLLTIIRDY…GESYRVVYNN (62 aa).

Belongs to the eukaryotic ribosomal protein eS4 family.

The chain is Small ribosomal subunit protein eS4 (rps4e) from Thermoplasma volcanium (strain ATCC 51530 / DSM 4299 / JCM 9571 / NBRC 15438 / GSS1).